The chain runs to 60 residues: Serum basic protease inhibitor (60 aa).

The 51-residue stretch at 7–57 (CLEPPYTGPCKAAMIRYFYNAKAGFCETFVYGGCRAKSNNFKSAEDCMRTC) folds into the BPTI/Kunitz inhibitor domain. 3 disulfides stabilise this stretch: cysteine 7–cysteine 57, cysteine 16–cysteine 40, and cysteine 32–cysteine 53.

The protein resides in the secreted. Functionally, this inhibitor has activity very similar to that of the basic protease inhibitor from bovine tissues. The polypeptide is Serum basic protease inhibitor (Bos taurus (Bovine)).